We begin with the raw amino-acid sequence, 505 residues long: MNETAWLDRVFSNTSLGHRLLDRLTLTNLRHAFYLISPYETTVESIDDVPNYNAEVSAWWLVFLTAEFFILFISGHEDRFALNDSITSICAGMLSQCFKFGGRAVAIFLYVIVWDNWRILELPWDSPWTWIFCLFFQDFMYYLGHRAVHEAGFFWGLHTIHHSSEYYNFSTALRQAAIQDAGLAIYDCIQAFFIPPSIFLVHRYFSEIFQFIMHTSLVDTMGPLGLVFNTPSHHRVHHGRNPYCIDKNYGGVFIIWDKMFNTFEAERHDDPPIYGLVTNENTFNQIYLQFHALWDILIFKGFTKDVKGEPMFPGVVNKLKATVFPPGWFPGVPVTPFFHWMSMVNPAHGVPEPEKPVLRYSPPARILVKVYVASSFLLLLAIFFHFEYDRNHLSYLDCTVKIAYFVVTMQCFGAFFDMKWYARYIEIARCCGVLIYYGVLMFDHIGAGTHRLFVISLHIMAIALWTTDVLVEKLSQCCSKNQSINPEKGDLERAPEIASISKNVQ.

Transmembrane regions (helical) follow at residues 56-76 (VSAW…ISGH) and 104-124 (AVAI…ELPW). The Fatty acid hydroxylase domain maps to 130 to 262 (WIFCLFFQDF…FIIWDKMFNT (133 aa)). A Histidine box-1 motif is present at residues 145-149 (HRAVH). The Histidine box-2 signature appears at 158-162 (HTIHH). Positions 234-238 (HRVHH) match the Histidine box-3 motif. 4 helical membrane-spanning segments follow: residues 366–386 (ILVK…FFHF), 396–416 (LDCT…GAFF), 430–450 (CCGV…AGTH), and 452–472 (LFVI…VLVE).

This sequence belongs to the sterol desaturase family. TMEM195 subfamily. Fe cation is required as a cofactor.

The protein localises to the endoplasmic reticulum membrane. The enzyme catalyses 1-O-(1,2-saturated-alkyl)-sn-glycerol + (6R)-L-erythro-5,6,7,8-tetrahydrobiopterin + O2 = a 1-(1-hydroxyalkyl)-sn-glycerol + (6R)-L-erythro-6,7-dihydrobiopterin + H2O. Glyceryl-ether monooxygenase that cleaves the O-alkyl bond of ether lipids. The sequence is that of Alkylglycerol monooxygenase from Caenorhabditis elegans.